The chain runs to 317 residues: Putative HTH-type transcriptional regulatory protein TGAM_1316 (317 aa).

The region spanning 131–189 (LKKLREKHGYSVGELASLLGVSRKSLLNYERNEQAVSLEVALRMEELFDEPIAEPIDVL) is the HTH cro/C1-type domain. The segment at residues 142–161 (VGELASLLGVSRKSLLNYER) is a DNA-binding region (H-T-H motif).

The chain is Putative HTH-type transcriptional regulatory protein TGAM_1316 from Thermococcus gammatolerans (strain DSM 15229 / JCM 11827 / EJ3).